The primary structure comprises 221 residues: MNKIKSMLSVYFIAGSQDCRHLPGSPVENLLNILQQALEAGITCFQFREKGERSLAQNPQLKHRLALQCQQLCRQFNVPFIINDDIGLALAIRADGIHVGQKDTAVERILSRADYRPIIGLSINTLEQAQANKERLGIDYFGIGPIFATQSKADHAPAVGMEFIRQIHELGIDKPCVAIGGIHEDNTAEIRRLGANGVAVISAITRSNDIARTVQNLACHS.

Residues 46–50 (QFREK) and Asn83 each bind 4-amino-2-methyl-5-(diphosphooxymethyl)pyrimidine. Mg(2+)-binding residues include Asp84 and Asp103. Ser122 serves as a coordination point for 4-amino-2-methyl-5-(diphosphooxymethyl)pyrimidine. 149 to 151 (TQS) is a 2-[(2R,5Z)-2-carboxy-4-methylthiazol-5(2H)-ylidene]ethyl phosphate binding site. Lys152 contributes to the 4-amino-2-methyl-5-(diphosphooxymethyl)pyrimidine binding site. 2-[(2R,5Z)-2-carboxy-4-methylthiazol-5(2H)-ylidene]ethyl phosphate-binding positions include Gly181 and 201–202 (IS).

This sequence belongs to the thiamine-phosphate synthase family. Mg(2+) is required as a cofactor.

The catalysed reaction is 2-[(2R,5Z)-2-carboxy-4-methylthiazol-5(2H)-ylidene]ethyl phosphate + 4-amino-2-methyl-5-(diphosphooxymethyl)pyrimidine + 2 H(+) = thiamine phosphate + CO2 + diphosphate. The enzyme catalyses 2-(2-carboxy-4-methylthiazol-5-yl)ethyl phosphate + 4-amino-2-methyl-5-(diphosphooxymethyl)pyrimidine + 2 H(+) = thiamine phosphate + CO2 + diphosphate. It carries out the reaction 4-methyl-5-(2-phosphooxyethyl)-thiazole + 4-amino-2-methyl-5-(diphosphooxymethyl)pyrimidine + H(+) = thiamine phosphate + diphosphate. It participates in cofactor biosynthesis; thiamine diphosphate biosynthesis; thiamine phosphate from 4-amino-2-methyl-5-diphosphomethylpyrimidine and 4-methyl-5-(2-phosphoethyl)-thiazole: step 1/1. Condenses 4-methyl-5-(beta-hydroxyethyl)thiazole monophosphate (THZ-P) and 2-methyl-4-amino-5-hydroxymethyl pyrimidine pyrophosphate (HMP-PP) to form thiamine monophosphate (TMP). The chain is Thiamine-phosphate synthase from Actinobacillus succinogenes (strain ATCC 55618 / DSM 22257 / CCUG 43843 / 130Z).